The following is a 455-amino-acid chain: tRNA modification GTPase MnmE (455 aa).

Arginine 22 serves as a coordination point for (6S)-5-formyl-5,6,7,8-tetrahydrofolate. The disordered stretch occupies residues 43–67; sequence RRATRAALRSPPSGPGPTGPGPEEG. The (6S)-5-formyl-5,6,7,8-tetrahydrofolate site is built by glutamate 92 and arginine 132. The TrmE-type G domain maps to 228–381; that stretch reads GLQVAVVGAP…LEAALESRAR (154 aa). Asparagine 238 lines the K(+) pocket. Residues 238–243, 257–263, and 282–285 contribute to the GTP site; these read NVGKSS, SDIAGTT, and DTAG. Serine 242 contributes to the Mg(2+) binding site. Residues serine 257, isoleucine 259, and threonine 262 each contribute to the K(+) site. Threonine 263 contributes to the Mg(2+) binding site. Lysine 455 contacts (6S)-5-formyl-5,6,7,8-tetrahydrofolate.

Belongs to the TRAFAC class TrmE-Era-EngA-EngB-Septin-like GTPase superfamily. TrmE GTPase family. In terms of assembly, homodimer. Heterotetramer of two MnmE and two MnmG subunits. It depends on K(+) as a cofactor.

The protein localises to the cytoplasm. Its function is as follows. Exhibits a very high intrinsic GTPase hydrolysis rate. Involved in the addition of a carboxymethylaminomethyl (cmnm) group at the wobble position (U34) of certain tRNAs, forming tRNA-cmnm(5)s(2)U34. This is tRNA modification GTPase MnmE from Rhodospirillum rubrum (strain ATCC 11170 / ATH 1.1.1 / DSM 467 / LMG 4362 / NCIMB 8255 / S1).